Here is a 381-residue protein sequence, read N- to C-terminus: MRNSGSSCSESVGPPLWLLAELTYRCPLQCPYCSNPLEFAREGAELSTAEWIEVFRQARELGAAQLGFSGGEPLLRQDLAELIEAGRGLGFYTNLITSGIGLDEARLARFAEAGLDHVQISFQAADEEVNNLLAGSRKAFAQKLAMARAVKAHGYPMVLNFVTHRHNIDNIERIIQLCIELEADYVELATCQFYGWAALNRAGLLPTRAQLERAERITAEYRQRLAAEGNPCKLIFVTPDYYEERPKACMGGWASVFLDITPDGTALPCHSARQLPVQFPNVREHSLRHIWYESFGFNRYRGDAWMPEPCRSCEEKERDHGGCRCQAFLLTGDADATDPVCAKSARHDLILAARRQAEEAPLGLDALTWRNQRASRLICKA.

Residues 12–228 enclose the Radical SAM core domain; it reads VGPPLWLLAE…AEYRQRLAAE (217 aa). [4Fe-4S] cluster is bound by residues Cys26, Cys30, and Cys33.

The protein belongs to the radical SAM superfamily. PqqE family. Interacts with PqqD. The interaction is necessary for activity of PqqE. [4Fe-4S] cluster is required as a cofactor.

The enzyme catalyses [PQQ precursor protein] + S-adenosyl-L-methionine = E-Y cross-linked-[PQQ precursor protein] + 5'-deoxyadenosine + L-methionine + H(+). The protein operates within cofactor biosynthesis; pyrroloquinoline quinone biosynthesis. Catalyzes the cross-linking of a glutamate residue and a tyrosine residue in the PqqA protein as part of the biosynthesis of pyrroloquinoline quinone (PQQ). The chain is PqqA peptide cyclase from Pseudomonas aeruginosa (strain LESB58).